The primary structure comprises 137 residues: Holo-[acyl-carrier-protein] synthase (137 aa).

Residues aspartate 8 and glutamate 58 each contribute to the Mg(2+) site.

This sequence belongs to the P-Pant transferase superfamily. AcpS family. Mg(2+) serves as cofactor.

Its subcellular location is the cytoplasm. The catalysed reaction is apo-[ACP] + CoA = holo-[ACP] + adenosine 3',5'-bisphosphate + H(+). Transfers the 4'-phosphopantetheine moiety from coenzyme A to a Ser of acyl-carrier-protein. This is Holo-[acyl-carrier-protein] synthase from Lactobacillus delbrueckii subsp. bulgaricus (strain ATCC BAA-365 / Lb-18).